A 626-amino-acid chain; its full sequence is tRNA uridine 5-carboxymethylaminomethyl modification enzyme MnmG (626 aa).

13–18 (GGGHAG) contributes to the FAD binding site. 273–287 (GPRYCPSIEDKIHRF) provides a ligand contact to NAD(+).

It belongs to the MnmG family. Homodimer. Heterotetramer of two MnmE and two MnmG subunits. It depends on FAD as a cofactor.

Its subcellular location is the cytoplasm. NAD-binding protein involved in the addition of a carboxymethylaminomethyl (cmnm) group at the wobble position (U34) of certain tRNAs, forming tRNA-cmnm(5)s(2)U34. This Acinetobacter baumannii (strain ATCC 17978 / DSM 105126 / CIP 53.77 / LMG 1025 / NCDC KC755 / 5377) protein is tRNA uridine 5-carboxymethylaminomethyl modification enzyme MnmG.